We begin with the raw amino-acid sequence, 283 residues long: Pseudokinase OPG198 (283 aa).

M1 and K30 together coordinate ATP. The region spanning 1–283 (MESFKYCFDN…DRLRRLFIQD (283 aa)) is the Protein kinase domain.

It belongs to the protein kinase superfamily. Ser/Thr protein kinase family. Poxviruses subfamily. In terms of assembly, interacts with B1/VPK1. Interacts with host VRK1. Interacts with host VRK2.

It localises to the host nucleus. With respect to regulation, both catalytically active kinases B1/VPK1 and host VRK2 repress B12 inhibitory activity in a B1/VPK1 deletion mutant strain. In terms of biological role, pseudokinase that plays a role in viral DNA replication repression by activating the antiviral protein BANF1 and inhibiting the activity of host VRK1, a cellular modulator of BANF1. This chain is Pseudokinase OPG198 (OPG198), found in Homo sapiens (Human).